The primary structure comprises 520 residues: MLARGLPLRSALVKACPPILSTVGEGWGHHRVGTGEGAGISTKTPRPYSEIPSPGDNGWLNLYHFWREKGSQRIHFRHIENFQKYGPIYREKLGNLESVYIIHPEDVAHLFKFEGSYPERYDIPPWLAYHRYYQKPIGVLFKKSGTWKKDRVVLNTEVMAPEAIKNFIPLLNPVSQDFVSLLHKRIKQQGSGKFVGDIKEDLFHFAFESITNVMFGERLGMLEETVNPEAQKFIDAVYKMFHTSVPLLNVPPELYRLFRTKTWRDHVAAWDTIFNKAEKYTEIFYQDLRRKTEFRNYPGILYCLLKSEKMLLEDVKANITEMLAGGVNTTSMTLQWHLYEMARSLNVQEMLREEVLNARRQAEGDISKMLQMVPLLKASIKETLRLHPISVTLQRYPESDLVLQDYLIPAKTLVQVAIYAMGRDPAFFSSPDKFDPTRWLSKDKDLIHFRNLGFGWGVRQCVGRRIAELEMTLFLIHILENFKVEMQHIGDVDTIFNLILTPDKPIFLVFRPFNQDPPQA.

The transit peptide at M1–G39 directs the protein to the mitochondrion. C461 is a heme binding site.

The protein belongs to the cytochrome P450 family. In terms of assembly, interacts with FDX1/adrenodoxin. Heme serves as cofactor. Detected in adrenal cortex and corpus luteum (at protein level).

It localises to the mitochondrion inner membrane. It carries out the reaction 6 reduced [adrenodoxin] + cholesterol + 3 O2 + 6 H(+) = 4-methylpentanal + pregnenolone + 6 oxidized [adrenodoxin] + 4 H2O. It catalyses the reaction 2 reduced [adrenodoxin] + cholesterol + O2 + 2 H(+) = (22R)-hydroxycholesterol + 2 oxidized [adrenodoxin] + H2O. The enzyme catalyses (22R)-hydroxycholesterol + 2 reduced [adrenodoxin] + O2 + 2 H(+) = (20R,22R)-20,22-dihydroxycholesterol + 2 oxidized [adrenodoxin] + H2O. The catalysed reaction is (20R,22R)-20,22-dihydroxycholesterol + 2 reduced [adrenodoxin] + O2 + 2 H(+) = 4-methylpentanal + pregnenolone + 2 oxidized [adrenodoxin] + 2 H2O. The protein operates within lipid metabolism; C21-steroid hormone metabolism. It functions in the pathway steroid metabolism; cholesterol metabolism. Its function is as follows. A cytochrome P450 monooxygenase that catalyzes the side-chain hydroxylation and cleavage of cholesterol to pregnenolone, the precursor of most steroid hormones. Catalyzes three sequential oxidation reactions of cholesterol, namely the hydroxylation at C22 followed with the hydroxylation at C20 to yield 20R,22R-hydroxycholesterol that is further cleaved between C20 and C22 to yield the C21-steroid pregnenolone and 4-methylpentanal. Mechanistically, uses molecular oxygen inserting one oxygen atom into a substrate and reducing the second into a water molecule. Two electrons are provided by NADPH via a two-protein mitochondrial transfer system comprising flavoprotein FDXR (adrenodoxin/ferredoxin reductase) and nonheme iron-sulfur protein FDX1 or FDX2 (adrenodoxin/ferredoxin). This is Cholesterol side-chain cleavage enzyme, mitochondrial (CYP11A1) from Bos taurus (Bovine).